Consider the following 447-residue polypeptide: SPARC-related modular calcium-binding protein 2 (447 aa).

The N-terminal stretch at 1 to 21 is a signal peptide; sequence MLPPQLCWLPLLAALLPPVPA. Residues 34-86 enclose the Kazal-like domain; the sequence is QDKDRDCSLDCPSSPQKPLCASDGRTFLSRCEFQRAKCKDPQLEIAHRGNCKD. 6 disulfides stabilise this stretch: C40–C71, C44–C64, C53–C84, C90–C113, C124–C131, and C133–C153. The 67-residue stretch at 87–153 folds into the Thyroglobulin type-1 1 domain; that stretch reads VSRCVAERKY…TAVAHKTPRC (67 aa). The interval 147–230 is disordered; it reads AHKTPRCPGS…QSALEEAKQP (84 aa). A compositionally biased stretch (basic and acidic residues) spans 161 to 172; the sequence is VPQREGAGKADD. N206 carries N-linked (GlcNAc...) asparagine glycosylation. Positions 206–216 are enriched in polar residues; sequence NKTNKNSASSC. The Thyroglobulin type-1 2 domain maps to 213–281; that stretch reads ASSCDQEHQS…TSTRYEQPKC (69 aa). Disulfide bonds link C216–C240, C251–C258, and C260–C281. Residues 217–230 show a composition bias toward basic and acidic residues; that stretch reads DQEHQSALEEAKQP. 2 consecutive EF-hand domains span residues 347-382 and 384-419; these read LEER…LRKK and KPKK…TREE. Positions 360, 362, 364, 366, 371, 397, 399, 401, 403, and 408 each coordinate Ca(2+). An N-linked (GlcNAc...) asparagine glycan is attached at N362. The segment at 416–447 is disordered; the sequence is TREEGKANTRKRHTPRGNAESSSSNRQPRKQG.

As to quaternary structure, binds various proteins from the extracellular matrix. Post-translationally, N-glycosylated. In terms of tissue distribution, strongly expressed in ovary, followed by heart, muscle, spleen, brain, thymus, lung, liver, kidney, spleen, testis, ovary and skeletal muscle.

The protein resides in the secreted. It is found in the extracellular space. It localises to the extracellular matrix. The protein localises to the basement membrane. Can stimulate endothelial cell proliferation, migration, as well as angiogenesis. Promotes matrix assembly and cell adhesiveness. The sequence is that of SPARC-related modular calcium-binding protein 2 (Smoc2) from Mus musculus (Mouse).